Reading from the N-terminus, the 344-residue chain is Holliday junction branch migration complex subunit RuvB (344 aa).

The interval 4-184 (QDRIIDANAK…FGIVQRLEFY (181 aa)) is large ATPase domain (RuvB-L). ATP contacts are provided by residues R24, G65, K68, T69, T70, 131–133 (EDF), R174, Y184, and R221. T69 provides a ligand contact to Mg(2+). A small ATPAse domain (RuvB-S) region spans residues 185-255 (NIEDLTHIVE…IADLALNMLN (71 aa)). Residues 258 to 344 (EHGFDHMDRR…ALKQDSLPGI (87 aa)) are head domain (RuvB-H). Residues R294, R313, and R318 each contribute to the DNA site.

The protein belongs to the RuvB family. As to quaternary structure, homohexamer. Forms an RuvA(8)-RuvB(12)-Holliday junction (HJ) complex. HJ DNA is sandwiched between 2 RuvA tetramers; dsDNA enters through RuvA and exits via RuvB. An RuvB hexamer assembles on each DNA strand where it exits the tetramer. Each RuvB hexamer is contacted by two RuvA subunits (via domain III) on 2 adjacent RuvB subunits; this complex drives branch migration. In the full resolvosome a probable DNA-RuvA(4)-RuvB(12)-RuvC(2) complex forms which resolves the HJ.

The protein localises to the cytoplasm. The catalysed reaction is ATP + H2O = ADP + phosphate + H(+). Its function is as follows. The RuvA-RuvB-RuvC complex processes Holliday junction (HJ) DNA during genetic recombination and DNA repair, while the RuvA-RuvB complex plays an important role in the rescue of blocked DNA replication forks via replication fork reversal (RFR). RuvA specifically binds to HJ cruciform DNA, conferring on it an open structure. The RuvB hexamer acts as an ATP-dependent pump, pulling dsDNA into and through the RuvAB complex. RuvB forms 2 homohexamers on either side of HJ DNA bound by 1 or 2 RuvA tetramers; 4 subunits per hexamer contact DNA at a time. Coordinated motions by a converter formed by DNA-disengaged RuvB subunits stimulates ATP hydrolysis and nucleotide exchange. Immobilization of the converter enables RuvB to convert the ATP-contained energy into a lever motion, pulling 2 nucleotides of DNA out of the RuvA tetramer per ATP hydrolyzed, thus driving DNA branch migration. The RuvB motors rotate together with the DNA substrate, which together with the progressing nucleotide cycle form the mechanistic basis for DNA recombination by continuous HJ branch migration. Branch migration allows RuvC to scan DNA until it finds its consensus sequence, where it cleaves and resolves cruciform DNA. The chain is Holliday junction branch migration complex subunit RuvB from Saccharophagus degradans (strain 2-40 / ATCC 43961 / DSM 17024).